The primary structure comprises 147 residues: MEQTYVMVKPDGVERGLIGEIVTRIEKKGLKIVAGKLMQIDRELAEKHYAEHIGKSFFEDLIGFITSGPVFAMVLEGDDAIATARRMMGKTNPLEADPGTIRADYAIHTNRNVIHGSDSLESAKREIQLFFAPQEILSYQKAIDTWI.

Residues Lys9, Phe57, Arg85, Thr91, Arg102, and Asn112 each contribute to the ATP site. The Pros-phosphohistidine intermediate role is filled by His115.

The protein belongs to the NDK family. Homotetramer. Mg(2+) is required as a cofactor.

The protein resides in the cytoplasm. The catalysed reaction is a 2'-deoxyribonucleoside 5'-diphosphate + ATP = a 2'-deoxyribonucleoside 5'-triphosphate + ADP. It carries out the reaction a ribonucleoside 5'-diphosphate + ATP = a ribonucleoside 5'-triphosphate + ADP. Functionally, major role in the synthesis of nucleoside triphosphates other than ATP. The ATP gamma phosphate is transferred to the NDP beta phosphate via a ping-pong mechanism, using a phosphorylated active-site intermediate. This is Nucleoside diphosphate kinase from Listeria monocytogenes serotype 4a (strain HCC23).